The primary structure comprises 502 residues: Lipoprotein LipO (502 aa).

The N-terminal stretch at 1–21 (MKIRMRKKWMALPLAAMMIAG) is a signal peptide. A lipid anchor (N-palmitoyl cysteine) is attached at Cys22. The S-diacylglycerol cysteine moiety is linked to residue Cys22.

It localises to the cell membrane. This chain is Lipoprotein LipO (lipO), found in Bacillus subtilis (strain 168).